Consider the following 1379-residue polypeptide: DNA-directed RNA polymerase subunit beta (1379 aa).

This sequence belongs to the RNA polymerase beta chain family. The RNAP catalytic core consists of 2 alpha, 1 beta, 1 beta' and 1 omega subunit. When a sigma factor is associated with the core the holoenzyme is formed, which can initiate transcription.

The catalysed reaction is RNA(n) + a ribonucleoside 5'-triphosphate = RNA(n+1) + diphosphate. Its function is as follows. DNA-dependent RNA polymerase catalyzes the transcription of DNA into RNA using the four ribonucleoside triphosphates as substrates. The sequence is that of DNA-directed RNA polymerase subunit beta from Campylobacter fetus subsp. fetus (strain 82-40).